A 510-amino-acid polypeptide reads, in one-letter code: Bifunctional purine biosynthesis protein PurH (510 aa).

One can recognise an MGS-like domain in the interval 1–143; sequence MTKRALISVS…KNHSGVLVLV (143 aa).

The protein belongs to the PurH family.

The enzyme catalyses (6R)-10-formyltetrahydrofolate + 5-amino-1-(5-phospho-beta-D-ribosyl)imidazole-4-carboxamide = 5-formamido-1-(5-phospho-D-ribosyl)imidazole-4-carboxamide + (6S)-5,6,7,8-tetrahydrofolate. It carries out the reaction IMP + H2O = 5-formamido-1-(5-phospho-D-ribosyl)imidazole-4-carboxamide. The protein operates within purine metabolism; IMP biosynthesis via de novo pathway; 5-formamido-1-(5-phospho-D-ribosyl)imidazole-4-carboxamide from 5-amino-1-(5-phospho-D-ribosyl)imidazole-4-carboxamide (10-formyl THF route): step 1/1. It participates in purine metabolism; IMP biosynthesis via de novo pathway; IMP from 5-formamido-1-(5-phospho-D-ribosyl)imidazole-4-carboxamide: step 1/1. The polypeptide is Bifunctional purine biosynthesis protein PurH (Deinococcus deserti (strain DSM 17065 / CIP 109153 / LMG 22923 / VCD115)).